A 122-amino-acid chain; its full sequence is Large ribosomal subunit protein uL14 (122 aa).

The protein belongs to the universal ribosomal protein uL14 family. Part of the 50S ribosomal subunit. Forms a cluster with proteins L3 and L19. In the 70S ribosome, L14 and L19 interact and together make contacts with the 16S rRNA in bridges B5 and B8.

In terms of biological role, binds to 23S rRNA. Forms part of two intersubunit bridges in the 70S ribosome. The sequence is that of Large ribosomal subunit protein uL14 from Agrobacterium fabrum (strain C58 / ATCC 33970) (Agrobacterium tumefaciens (strain C58)).